The chain runs to 865 residues: Alanine--tRNA ligase (865 aa).

4 residues coordinate Zn(2+): histidine 554, histidine 558, cysteine 656, and histidine 660.

This sequence belongs to the class-II aminoacyl-tRNA synthetase family. The cofactor is Zn(2+).

Its subcellular location is the cytoplasm. The catalysed reaction is tRNA(Ala) + L-alanine + ATP = L-alanyl-tRNA(Ala) + AMP + diphosphate. Catalyzes the attachment of alanine to tRNA(Ala) in a two-step reaction: alanine is first activated by ATP to form Ala-AMP and then transferred to the acceptor end of tRNA(Ala). Also edits incorrectly charged Ser-tRNA(Ala) and Gly-tRNA(Ala) via its editing domain. The polypeptide is Alanine--tRNA ligase (Francisella tularensis subsp. tularensis (strain WY96-3418)).